The chain runs to 503 residues: Plant-specific TFIIB-related protein 1 (503 aa).

The TFIIB-type zinc-finger motif lies at 1–33 (MKCPYCSSAQGRCTTTSSGRSITECSSCGRVME). Disordered stretches follow at residues 328 to 366 (PEKAFPTTTISTTRSTTPRAVDPPEPSFVEKDKPSAKPI), 411 to 431 (NAMDYEKQQLDKQQQQQLGDK), 436 to 455 (IYLRDHNPFPSNPSPSTGIS), and 468 to 503 (GSSSNLPVIHPPKLPPGYAEIRGSGSRNADNPHGDF). Residues 333–346 (PTTTISTTRSTTPR) are compositionally biased toward low complexity. Basic and acidic residues predominate over residues 355–366 (FVEKDKPSAKPI).

Ubiquinated. Subsequent degradation by the proteasome pathway. Widely expressed.

The protein resides in the plastid. Its subcellular location is the chloroplast outer membrane. It localises to the nucleus. Its function is as follows. Plant-specific TFIIB-related protein that may be involved in an intracellular signaling pathway between plastids and the nucleus. May act as general transcription factor (GTF) of RNA polymerase I-dependent transcription and rRNA synthesis. Forms a ternary complex with TBP2 and the rDNA promoter region. This chain is Plant-specific TFIIB-related protein 1, found in Arabidopsis thaliana (Mouse-ear cress).